Consider the following 804-residue polypeptide: ATP-dependent RNA helicase dbp4 (804 aa).

Positions 1 to 24 are disordered; the sequence is MAPANAPRNGKYAKSSQRTLKRKR. Positions 46 to 74 match the Q motif motif; sequence KAFTDLPLSEPTLSGLSASHYKTLTDIQS. One can recognise a Helicase ATP-binding domain in the interval 77–251; sequence VSHALKGRDI…RLSLQDPEYV (175 aa). An ATP-binding site is contributed by 90–97; it reads AKTGSGKT. The DEAD box signature appears at 199 to 202; it reads DEAD. Residues 277 to 436 enclose the Helicase C-terminal domain; the sequence is KLDILWSFIR…SIKNQLQNMC (160 aa). Disordered regions lie at residues 493–541, 589–615, and 695–804; these read GDDT…DRMF, DKQL…KDVK, and LADV…GLLG. Over residues 521 to 541 the composition is skewed to basic and acidic residues; the sequence is DEKKSKKKDAPQVRTKYDRMF. The segment covering 695–705 has biased composition (basic and acidic residues); sequence LADVEDKELVK. Positions 706–715 are enriched in basic residues; sequence QKRREKKEKR.

This sequence belongs to the DEAD box helicase family. DDX10/DBP4 subfamily. In terms of assembly, interacts with the U3 and U14 snoRNAs. Associates with pre-ribosomal complexes.

Its subcellular location is the nucleus. The protein localises to the nucleolus. It catalyses the reaction ATP + H2O = ADP + phosphate + H(+). ATP-dependent RNA helicase required for ribosome biogenesis. Involved in the release of U14 snoRNA in pre-ribosomal complexes. Required for pre-rRNA cleavage at site A2. This Aspergillus terreus (strain NIH 2624 / FGSC A1156) protein is ATP-dependent RNA helicase dbp4 (dbp4).